A 279-amino-acid chain; its full sequence is Osmoprotective compounds uptake permease protein GgtC (279 aa).

Helical transmembrane passes span 7-27, 58-78, 90-110, 120-140, 146-166, 202-222, and 247-267; these read LLFL…LSFF, LWLV…AVLV, IIFL…KFVY, IGLL…WLVE, FALI…ILSA, LLVV…IVFV, and FGRG…VMIT. The 218-residue stretch at 53–270 folds into the ABC transmembrane type-1 domain; the sequence is FRNNLLWLVL…IVPVMITNIR (218 aa).

The protein belongs to the binding-protein-dependent transport system permease family. As to quaternary structure, the complex is composed of two ATP-binding proteins (GgtA), two transmembrane proteins (GgtC and GgtD) and a solute-binding protein (GgtB).

It localises to the cell membrane. Its function is as follows. Part of the ABC transporter complex GgtABCD involved in the uptake of the osmoprotective compounds glucosylglycerol (GG), sucrose and trehalose. Responsible for the translocation of the substrate across the membrane. This chain is Osmoprotective compounds uptake permease protein GgtC, found in Synechocystis sp. (strain ATCC 27184 / PCC 6803 / Kazusa).